Here is a 162-residue protein sequence, read N- to C-terminus: Protein A49 (162 aa).

It belongs to the poxviridae A49 protein family.

The sequence is that of Protein A49 from Variola virus (isolate Human/India/Ind3/1967) (VARV).